The sequence spans 1045 residues: Eukaryotic translation initiation factor 5B (1045 aa).

2 disordered regions span residues 1-325 and 339-384; these read MGPK…AAEA and SAVG…PKDD. The segment covering 8–27 has biased composition (basic and acidic residues); it reads RKDNYWDSGEADKDREEAEK. A compositionally biased stretch (acidic residues) spans 62–73; the sequence is SSSESEESSSEE. A compositionally biased stretch (low complexity) spans 81-92; sequence KPAAKQSKKVAP. 3 stretches are compositionally biased toward acidic residues: residues 105-120, 155-169, and 199-212; these read SSEEEESESESEESSE, SSEESESESEESSSE, and SESEEESSSSEEEE. The span at 216-241 shows a compositional bias: low complexity; that stretch reads KPTQNNNNKKNNAKKPPAAKPSAAKQ. Basic and acidic residues predominate over residues 264–325; sequence QRQEEERIAR…EKQAGAAAEA (62 aa). The segment covering 351–361 has biased composition (low complexity); that stretch reads KTKSGGKKQNQ. Residues 368-384 are compositionally biased toward basic and acidic residues; sequence SVEKLKIEEPTSAPKDD. The tr-type G domain maps to 458–675; the sequence is YRSPIICILG…VVIQLMQKLM (218 aa). A G1 region spans residues 467–474; the sequence is GHVDTGKT. GTP is bound at residue 467-474; sequence GHVDTGKT. The interval 492–496 is G2; the sequence is GITQQ. The segment at 531–534 is G3; the sequence is DTPG. The segment at 585–588 is G4; that stretch reads NKVD. Residues 653-655 form a G5 region; it reads SAN.

It belongs to the TRAFAC class translation factor GTPase superfamily. Classic translation factor GTPase family. IF-2 subfamily. It depends on a monovalent cation as a cofactor.

The protein localises to the cytoplasm. It catalyses the reaction GTP + H2O = GDP + phosphate + H(+). Functionally, plays a role in translation initiation. Translational GTPase that catalyzes the joining of the 40S and 60S subunits to form the 80S initiation complex with the initiator methionine-tRNA in the P-site base paired to the start codon. GTP binding and hydrolysis induces conformational changes in the enzyme that renders it active for productive interactions with the ribosome. The release of the enzyme after formation of the initiation complex is a prerequisite to form elongation-competent ribosomes. This Dictyostelium discoideum (Social amoeba) protein is Eukaryotic translation initiation factor 5B (eif5b).